Reading from the N-terminus, the 394-residue chain is Seipin (394 aa).

At 1-27 (MVNDPPVPALLWAQEMGHVMAGRARKL) the chain is on the cytoplasmic side. A helical membrane pass occupies residues 28 to 48 (LLQFGVFFCTILLLLWVSVFL). Over 49-242 (YGSFYYSYMP…TCAFVGVASN (194 aa)) the chain is Lumenal. 2 N-linked (GlcNAc...) asparagine glycosylation sites follow: N88 and N242. A helical transmembrane segment spans residues 243 to 263 (FTFLSVIVLFSYMQWVWGGIW). The Cytoplasmic segment spans residues 264–394 (PRQRLSLQVN…VRQRPICSSS (131 aa)). Positions 281–394 (RKDIQRKVSA…VRQRPICSSS (114 aa)) are disordered. S289 is subject to Phosphoserine. Residues 292-303 (QPGPQGQEESPQ) show a composition bias toward low complexity. Phosphoserine occurs at positions 346 and 351.

The protein belongs to the seipin family. Undecamer (an oligomer having eleven subunits). Oligomerization is important for its function in lipid droplet formation. Interacts with LDAF1 to form an oligomeric complex. Interacts with RAB18. Interacts with ZFYVE1 in a RAB18-dependent manner.

The protein localises to the endoplasmic reticulum membrane. It is found in the lipid droplet. In terms of biological role, plays a crucial role in the formation of lipid droplets (LDs) which are storage organelles at the center of lipid and energy homeostasis. In association with LDAF1, defines the sites of LD formation in the ER. Also required for growth and maturation of small nascent LDs into larger mature LDs. Mediates the formation and/or stabilization of endoplasmic reticulum-lipid droplets (ER-LD) contacts, facilitating protein and lipid delivery from the ER into growing LDs. Regulates the maturation of ZFYVE1-positive nascent LDs and the function of the RAB18-ZFYVE1 complex in mediating the formation of ER-LD contacts. Binds anionic phospholipids including phosphatidic acid. Plays an important role in the differentiation and development of adipocytes. The sequence is that of Seipin from Bos taurus (Bovine).